A 214-amino-acid polypeptide reads, in one-letter code: Adenylate kinase (214 aa).

ATP is bound at residue glycine 10–threonine 15. Residues serine 30–valine 59 form an NMP region. AMP-binding positions include threonine 31, arginine 36, lysine 57 to valine 59, glycine 85 to arginine 88, and glutamine 92. Residues glycine 122 to aspartate 159 form an LID region. Residues arginine 123 and valine 132–tyrosine 133 each bind ATP. 2 residues coordinate AMP: arginine 156 and arginine 167. Position 200 (arginine 200) interacts with ATP.

It belongs to the adenylate kinase family. In terms of assembly, monomer.

The protein resides in the cytoplasm. It catalyses the reaction AMP + ATP = 2 ADP. The protein operates within purine metabolism; AMP biosynthesis via salvage pathway; AMP from ADP: step 1/1. Its function is as follows. Catalyzes the reversible transfer of the terminal phosphate group between ATP and AMP. Plays an important role in cellular energy homeostasis and in adenine nucleotide metabolism. The protein is Adenylate kinase of Yersinia pseudotuberculosis serotype O:1b (strain IP 31758).